Here is a 421-residue protein sequence, read N- to C-terminus: Histidine--tRNA ligase (421 aa).

Belongs to the class-II aminoacyl-tRNA synthetase family. In terms of assembly, homodimer.

The protein resides in the cytoplasm. The enzyme catalyses tRNA(His) + L-histidine + ATP = L-histidyl-tRNA(His) + AMP + diphosphate + H(+). This chain is Histidine--tRNA ligase, found in Thermus thermophilus (strain ATCC BAA-163 / DSM 7039 / HB27).